Here is a 257-residue protein sequence, read N- to C-terminus: Small ribosomal subunit protein uS3 (257 aa).

The region spanning 40–110 (IRKYLSTKYK…LVSLKVVEVQ (71 aa)) is the KH type-2 domain. Positions 223-257 (ANKEFSRSSKPKKGSFNRSSRSKNTKPAPKQAVSE) are disordered. Over residues 231–246 (SKPKKGSFNRSSRSKN) the composition is skewed to basic residues.

It belongs to the universal ribosomal protein uS3 family. Part of the 30S ribosomal subunit. Forms a tight complex with proteins S10 and S14.

In terms of biological role, binds the lower part of the 30S subunit head. Binds mRNA in the 70S ribosome, positioning it for translation. This Ureaplasma parvum serovar 3 (strain ATCC 27815 / 27 / NCTC 11736) protein is Small ribosomal subunit protein uS3.